We begin with the raw amino-acid sequence, 297 residues long: Coiled-coil domain-containing protein 196 (297 aa).

Positions 83 to 117 form a coiled coil; sequence ESSVMELLKEAEEMKQNLERKNKMLRKEMEMLWNK. The tract at residues 122–161 is disordered; sequence EELSDQQKAPQTKNKADLQDGKAPKSPSSPRKTESELEKS. Basic and acidic residues-rich tracts occupy residues 135–144 and 152–161; these read NKADLQDGKA and RKTESELEKS.

This chain is Coiled-coil domain-containing protein 196, found in Homo sapiens (Human).